The sequence spans 305 residues: Serine/threonine-protein kinase 16 (305 aa).

Glycine 2 is lipidated: N-myristoyl glycine. Residues cysteine 6 and cysteine 8 are each lipidated (S-palmitoyl cysteine). The Protein kinase domain occupies 20–293 (YLFIQKLGEG…PLLLSQLEAL (274 aa)). Residues 26–34 (LGEGGFSYV) and lysine 49 each bind ATP. Aspartate 148 functions as the Proton acceptor in the catalytic mechanism. The activation loop stretch occupies residues 166–202 (DLGSMNQACIHVEGSRQALTLQDWAAQRCTISYRAPE). The residue at position 185 (threonine 185) is a Phosphothreonine; by autocatalysis. Phosphoserine; by autocatalysis is present on serine 197. Position 198 is a phosphotyrosine; by autocatalysis (tyrosine 198).

The protein belongs to the protein kinase superfamily. Ser/Thr protein kinase family. Monomer. Interacts with DRG1 (via its N-terminal); the interaction phosphorylates DRG1. In terms of processing, mainly autophosphorylated on serine/threonine residues. Also autophosphorylated on Tyr-198. It is uncertain whether palmitoylation is on Cys-6 and/or Cys-8. As to expression, ubiquitously expressed at very low levels.

It localises to the cytoplasm. Its subcellular location is the perinuclear region. The protein localises to the membrane. The enzyme catalyses L-seryl-[protein] + ATP = O-phospho-L-seryl-[protein] + ADP + H(+). The catalysed reaction is L-threonyl-[protein] + ATP = O-phospho-L-threonyl-[protein] + ADP + H(+). It catalyses the reaction L-tyrosyl-[protein] + ATP = O-phospho-L-tyrosyl-[protein] + ADP + H(+). Membrane-associated protein kinase that phosphorylates on serine and threonine residues. In vitro substrates include DRG1, ENO1 and EIF4EBP1. Also autophosphorylates. May be involved in secretory vesicle trafficking or intracellular signaling. May have a role in regulating stromal-epithelial interactions that occur during ductal morphogenesis in the mammary gland. May be involved in TGF-beta signaling. Able to autophosphorylate on Tyr residue; it is however unclear whether it has tyrosine-protein kinase toward other proteins. The chain is Serine/threonine-protein kinase 16 (STK16) from Homo sapiens (Human).